We begin with the raw amino-acid sequence, 856 residues long: Wall-associated receptor kinase 17 (856 aa).

The first 42 residues, 1-42 (MPSRSPACRPRGRNRRSAADAVARPLALALILVSTLPRAAHS), serve as a signal peptide directing secretion. Residues Asn171 and Asn234 are each glycosylated (N-linked (GlcNAc...) asparagine). In terms of domain architecture, EGF-like 1 spans 297–334 (FEKLCKYGTCVDAPTGAGYLCKCPSGYDGNPYVSDGCQ). Intrachain disulfides connect Cys301-Cys306, Cys319-Cys333, Cys339-Cys353, Cys347-Cys362, and Cys364-Cys379. The EGF-like 2; calcium-binding domain maps to 335–380 (DINECRNYNSNNCTYQNLCNNTLGGYTCSCPENNIGDGYRTGTGCN). N-linked (GlcNAc...) asparagine glycosylation is found at Asn346 and Asn354. Asn380 carries N-linked (GlcNAc...) asparagine glycosylation. Residues 452-470 (VLGVSLVLMVTTTTAASCY) traverse the membrane as a helical segment. The Protein kinase domain occupies 527-805 (YSESRILGRG…VLQELRRSFT (279 aa)). ATP-binding positions include 533–541 (LGRGGQGTV) and Lys555. Catalysis depends on Asp652, which acts as the Proton acceptor. The interval 816 to 844 (SIQENSEQEEKHLHESRSIPSLQSSEVST) is disordered. Basic and acidic residues predominate over residues 823–832 (QEEKHLHESR). Residues 833–844 (SIPSLQSSEVST) are compositionally biased toward polar residues.

It belongs to the protein kinase superfamily. Ser/Thr protein kinase family. In terms of assembly, interacts with WAK17 isoform 2; the interaction is direct. Interacts with LRR5; the interaction is direct. Interacts with WAK17 isoform 1; the interaction is direct. As to quaternary structure, (Microbial infection) Interacts with G.zeae CFEM1 (via CFEM domain); the interaction is direct. Interacts with G.zeae CFEMN1; the interaction is direct. Interacts with G.zeae CFEM5; the interaction is direct. Requires Mn(2+) as cofactor. It depends on Mg(2+) as a cofactor.

The protein resides in the cell membrane. The enzyme catalyses L-seryl-[protein] + ATP = O-phospho-L-seryl-[protein] + ADP + H(+). It carries out the reaction L-threonyl-[protein] + ATP = O-phospho-L-threonyl-[protein] + ADP + H(+). Kinase that contributes to activation of the hypersensitive response, a form of programmed cell death, upon fungal infection. In terms of biological role, secreted protein that contributes to activation of the hypersensitive response, a form of programmed cell death, upon fungal infection. May sense the presence of fungal material and relay the signal to WAK17 isoform 1. The protein is Wall-associated receptor kinase 17 of Zea mays (Maize).